The sequence spans 410 residues: Auxin-induced protein 5NG4 (410 aa).

The Cytoplasmic segment spans residues 1-16 (MASNIMQRCNVFMSER). A helical transmembrane segment spans residues 17–37 (VKLHAAMLALQFGYAGFHIVS). Residues 38-47 (RAALNMGVSK) lie on the Extracellular side of the membrane. Residues 48 to 68 (VVFPVYRNILALMLIGPCAYF) traverse the membrane as a helical segment. At 69–74 (LEKKER) the chain is on the cytoplasmic side. Residues 75–95 (PALTLSFLIQFFLLALCGITG) traverse the membrane as a helical segment. Residues 96–109 (QSRILSLRIVLHIP) lie on the Extracellular side of the membrane. A helical transmembrane segment spans residues 110 to 130 (TFASAIQNSVPAITFIMAAAL). The Cytoplasmic portion of the chain corresponds to 131–141 (RLEKVHISRRD). A helical membrane pass occupies residues 142–162 (GLAKIIGTVACVSGATIITLY). Residues 163–196 (KGPPITHIWRPNLEVTASYFKAFQGNDLSAKSEN) are Extracellular-facing. An N-linked (GlcNAc...) asparagine glycan is attached at Asn-196. Residues 197–217 (WTLGCIYLLGNCLAWSGWIVL) traverse the membrane as a helical segment. The region spanning 209 to 338 (LAWSGWIVLQ…IIIGLYLVLW (130 aa)) is the EamA domain. The Cytoplasmic segment spans residues 218-229 (QAPVLKRYPARL). Residues 230-250 (SVTSFTCFFGVIQFLIIAAFF) form a helical membrane-spanning segment. The Extracellular portion of the chain corresponds to 251-264 (ETDLEHWKIHSGGE). The helical transmembrane segment at 265-285 (LFTILYAGFVASGIAFSVQIW) threads the bilayer. The Cytoplasmic portion of the chain corresponds to 286–292 (CIDRGGP). The helical transmembrane segment at 293 to 313 (VFVAVYQPVQTIAVAIMASII) threads the bilayer. The Extracellular portion of the chain corresponds to 314-317 (LGEQ). Residues 318–338 (FYLGGIFGAILIIIGLYLVLW) form a helical membrane-spanning segment. The Cytoplasmic portion of the chain corresponds to 339-410 (GKSEEKRLGL…IPSPSDEPQP (72 aa)).

Belongs to the drug/metabolite transporter (DMT) superfamily. Plant drug/metabolite exporter (P-DME) (TC 2.A.7.4) family.

It is found in the membrane. This is Auxin-induced protein 5NG4 from Pinus taeda (Loblolly pine).